The chain runs to 636 residues: Chaperone protein DnaK (636 aa).

Residue T198 is modified to Phosphothreonine; by autocatalysis. The interval 598 to 636 (YAAKEQPGEHGETGSGEQARKESGKDENVVDADFEEVKK) is disordered. Basic and acidic residues predominate over residues 603-625 (QPGEHGETGSGEQARKESGKDEN). Positions 626–636 (VVDADFEEVKK) are enriched in acidic residues.

Belongs to the heat shock protein 70 family.

Acts as a chaperone. This is Chaperone protein DnaK from Pelobacter propionicus (strain DSM 2379 / NBRC 103807 / OttBd1).